We begin with the raw amino-acid sequence, 1368 residues long: Alpha-latrotoxin-Lg1a (1368 aa).

The tract at residues Val217–Leu236 is helix H8 is the probable transmembrane region of the tetrameric pore inserted in the target cell membrane. A disulfide bridge connects residues Cys392 and Cys1044. ANK repeat units lie at residues Gln469 to Gln500, Lys504 to Ser533, Phe538 to Glu568, Asp572 to Val601, Lys605 to Ala635, Asn639 to Ala669, Gly674 to Leu704, Gly708 to Gln737, Glu741 to Ala770, Thr774 to Glu803, Asn807 to Ile837, Asn841 to Thr870, Lys874 to Ile903, Asp907 to Trp936, Ile953 to Ser981, Ile982 to Gly1011, Lys1013 to His1042, Asn1046 to Arg1075, Leu1079 to Ile1109, and Asn1115 to Ile1144. The tract at residues Lys1174 to Arg1177 is furin-like endopeptidase recognition region. Positions Glu1178–Ser1368 are excised as a propeptide.

The protein belongs to the cationic peptide 01 (latrotoxin) family. 03 (alpha-latrotoxin) subfamily. In terms of assembly, homotetramer in membranes. Expressed in venom gland, cephalothorax, and abdomen tissues from both males and females.

It is found in the secreted. It localises to the target cell membrane. Presynaptic neurotoxin that causes massive release of neurotransmitters from vertebrate (but not invertebrate) nerve terminals and endocrine cells via a complex mechanism involving activation of receptor(s) and toxin insertion into the plasma membrane with subsequent pore formation. Binds to neurexin-1-alpha (NRXN1) in a calcium dependent manner, adhesion G protein-coupled receptor L1 (ADGRL1, also termed latrophilin-1 and calcium-independent receptor of latrotoxin (CIRL)), and receptor-type tyrosine-protein phosphatase S (PTPRS), also termed PTP sigma. NRXN1 and PTPRS are suggested to provide a platform for binding and subsequent pore formation events. In contrast, binding to ADGRL1 does not involve oligomerization and channel formation, but direct downstream stimulation of the synaptic fusion machinery. This chain is Alpha-latrotoxin-Lg1a, found in Latrodectus geometricus (Brown widow spider).